The chain runs to 94 residues: Co-chaperonin GroES (94 aa).

This sequence belongs to the GroES chaperonin family. Heptamer of 7 subunits arranged in a ring. Interacts with the chaperonin GroEL.

Its subcellular location is the cytoplasm. Its function is as follows. Together with the chaperonin GroEL, plays an essential role in assisting protein folding. The GroEL-GroES system forms a nano-cage that allows encapsulation of the non-native substrate proteins and provides a physical environment optimized to promote and accelerate protein folding. GroES binds to the apical surface of the GroEL ring, thereby capping the opening of the GroEL channel. The polypeptide is Co-chaperonin GroES (Shouchella clausii (strain KSM-K16) (Alkalihalobacillus clausii)).